Here is a 378-residue protein sequence, read N- to C-terminus: Long-chain-fatty-acid--luciferin-component ligase (378 aa).

It belongs to the LuxE family.

It carries out the reaction a long-chain fatty acid + L-cysteinyl-[protein] + ATP = an S-(long-chain fatty acyl)-L-cysteinyl-[protein] + AMP + diphosphate. The protein operates within lipid metabolism; fatty acid reduction for biolumincescence. Functionally, acyl-protein synthetase activates tetradecanoic acid. It is a component of the fatty acid reductase complex responsible for converting tetradecanoic acid to the aldehyde which serves as substrate in the luciferase-catalyzed reaction. This chain is Long-chain-fatty-acid--luciferin-component ligase, found in Aliivibrio fischeri (Vibrio fischeri).